The following is a 431-amino-acid chain: MSKCVNGLRSRLTAIIGAQWGDEGKGKLVDILAEKYDYCARFNGGANAGHTIVVGGVKYAFHLLPCGILYQTCMNVIGNGVVVNIPTLFEELAQLDKNRVDYTGRLVISNRAHLVVDGLLEADAKSESDSRKKFLGTTKRGIGPTYSAKALRQGLRVGDLLHWDTFLLKYHSLNAKLREQEGIQIDTQKEINTLKDYRDILINRNMIVDTISLIANARKDGRRILAEGANATMLDIDYGTYPYVTSSSTNVGGVCTGLGVPPSAIETVIGIVKAYTTRVGEGPFPTELTNETGKYLQKTGHEFGATTGRPRRCGWLDIPILRYSIQINGHSSINLTKLDILTGLEEIKIGVNYLLNGKVIDYIPAQLEELAQVEVEYITVKGWKQDISDCKTFSELPVEAQNYIKKIEELLGIPVSWIGNGPQREKIILKD.

GTP contacts are provided by residues 21-27 (GDEGKGK) and 49-51 (GHT). Residue Asp-22 is the Proton acceptor of the active site. The Mg(2+) site is built by Asp-22 and Gly-49. Residues 22-25 (DEGK), 47-50 (NAGH), Thr-138, Arg-152, Asn-230, Thr-245, and Arg-309 contribute to the IMP site. The active-site Proton donor is His-50. 305–311 (ATTGRPR) is a binding site for substrate. GTP contacts are provided by residues Arg-311, 337–339 (KLD), and 419–421 (GNG).

This sequence belongs to the adenylosuccinate synthetase family. As to quaternary structure, homodimer. Mg(2+) is required as a cofactor.

The protein resides in the cytoplasm. It catalyses the reaction IMP + L-aspartate + GTP = N(6)-(1,2-dicarboxyethyl)-AMP + GDP + phosphate + 2 H(+). The protein operates within purine metabolism; AMP biosynthesis via de novo pathway; AMP from IMP: step 1/2. In terms of biological role, plays an important role in the de novo pathway and in the salvage pathway of purine nucleotide biosynthesis. Catalyzes the first committed step in the biosynthesis of AMP from IMP. This is Adenylosuccinate synthetase from Paramecium tetraurelia.